Reading from the N-terminus, the 350-residue chain is Twinfilin-1 (350 aa).

Residue Ser2 is modified to N-acetylserine. The ADF-H 1 domain occupies 2 to 139; that stretch reads SHQTGIQASE…SLHGYKKYLL (138 aa). 2 positions are modified to phosphoserine: Ser143 and Ser277. The ADF-H 2 domain maps to 175-313; the sequence is LQGVAFPISR…TADFLYEEVH (139 aa). Tyr309 is modified (phosphotyrosine). The interval 316–350 is disordered; that stretch reads QHAHKQSFAKPKGPAGKRGIRRLIRGPAETEATTD. At Thr349 the chain carries Phosphothreonine.

It belongs to the actin-binding proteins ADF family. Twinfilin subfamily. As to quaternary structure, interacts with G-actin; ADP-actin form and capping protein (CP). May also be able to interact with TWF2 and phosphoinositides, PI(4,5)P2. When bound to PI(4,5)P2, it is down-regulated. Interacts with ACTG1. Post-translationally, phosphorylated on serine and threonine residues. As to expression, expressed at high levels in the colon, testis, ovary, prostate and lung. Expressed at lower levels in the brain, bladder and heart. Not detected in liver.

It localises to the cytoplasm. The protein localises to the cytoskeleton. Its function is as follows. Actin-binding protein involved in motile and morphological processes. Inhibits actin polymerization, likely by sequestering G-actin. By capping the barbed ends of filaments, it also regulates motility. Seems to play an important role in clathrin-mediated endocytosis and distribution of endocytic organelles. The sequence is that of Twinfilin-1 (TWF1) from Homo sapiens (Human).